A 601-amino-acid polypeptide reads, in one-letter code: MEGADLLTAGVLFLFAAVAAVPLAARLGIGAVLGYLLAGIAIGPWGLGFISDVDEILHFSELGVVFLMFIIGLELNPSRLWQLRRSIFGVGAAQVLLSAAVLAGLLMLADFLWQAAVVGGIGLAMSSTAMALQLMREKGMNRSESGQLGFSVLLFQDLAVIPALALVPLLAGSADEHFDWFKVAMKVLAFAVMLIGGRYLLRPVFRFIAASGVREVFTAATLLLVLSAALFMDALGLSMALGTFIAGVLLAESEYRHELENAIDPFKGLLLGLFFISVGMSLNLGVLYTHLLWVAASVVILVVIKMLTLYLLARLYGIRSSERMQFASVLSQGGEFAFVLFSTASSQRLFQGDQMALLLVTVTLSMMTTPLLMKGIDKWLSRRLNGPEENDEKPWVEDDKPQVIVVGFGRFGQVIARLLMANKMRITVLERDIGAVNLMRKYGYKVYYGDATQVELLRSAGAEAAESIVITCNEPEDTMKLVALCQQHFPHLHILARARGRVEAHELLQAGVTQFSRETFSSALELGRKTLVSLGMHPHQAQRAQLHFRRLDMRMLRELIPEHSDMVQISRAREARRELEEIFQREMQQERRQLDGWDEFE.

13 consecutive transmembrane segments (helical) span residues 4 to 24, 29 to 49, 55 to 75, 87 to 107, 111 to 131, 152 to 172, 177 to 197, 207 to 227, 230 to 250, 262 to 282, 284 to 304, 324 to 344, and 356 to 376; these read ADLLTAGVLFLFAAVAAVPLA, IGAVLGYLLAGIAIGPWGLGF, EILHFSELGVVFLMFIIGLEL, IFGVGAAQVLLSAAVLAGLLM, FLWQAAVVGGIGLAMSSTAMA, VLLFQDLAVIPALALVPLLAG, HFDWFKVAMKVLAFAVMLIGG, FIAASGVREVFTAATLLLVLS, LFMDALGLSMALGTFIAGVLL, AIDPFKGLLLGLFFISVGMSL, LGVLYTHLLWVAASVVILVVI, MQFASVLSQGGEFAFVLFSTA, and ALLLVTVTLSMMTTPLLMKGI. In terms of domain architecture, RCK N-terminal spans 400 to 519; sequence KPQVIVVGFG…AGVTQFSRET (120 aa).

The protein belongs to the monovalent cation:proton antiporter 2 (CPA2) transporter (TC 2.A.37) family. KefB subfamily. In terms of assembly, interacts with the regulatory subunit KefG.

It localises to the cell inner membrane. Pore-forming subunit of a potassium efflux system that confers protection against electrophiles. Catalyzes K(+)/H(+) antiport. The protein is Glutathione-regulated potassium-efflux system protein KefB of Salmonella paratyphi B (strain ATCC BAA-1250 / SPB7).